A 642-amino-acid chain; its full sequence is G protein-coupled receptor kinase 1 (642 aa).

The tract at residues 1-202 is N-terminal; sequence MEIENIVANT…LEKRPVDKHT (202 aa). The RGS domain maps to 52–188; it reads YAFVVEKQPI…AESMYFHRFL (137 aa). A Protein kinase domain is found at 203–470; the sequence is FRLYRVLGKG…AEEIRAHPFF (268 aa). Residues 209–217 and Lys232 contribute to the ATP site; that span reads LGKGGFGEV. The active-site Proton acceptor is the Asp328. The AGC-kinase C-terminal domain occupies 480–545; that stretch reads EPVPWKKMEA…GCVSIPWQSE (66 aa). Residues 612 to 642 form a disordered region; sequence VEQQQPPKTSTQTPAVRSSRAASASGRTLVI. A compositionally biased stretch (low complexity) spans 614–636; that stretch reads QQQPPKTSTQTPAVRSSRAASAS.

This sequence belongs to the protein kinase superfamily. AGC Ser/Thr protein kinase family. GPRK subfamily.

The catalysed reaction is [G-protein-coupled receptor] + ATP = [G-protein-coupled receptor]-phosphate + ADP + H(+). In terms of biological role, specifically phosphorylates the activated forms of G protein-coupled receptors. The sequence is that of G protein-coupled receptor kinase 1 (grk-1) from Caenorhabditis elegans.